The chain runs to 406 residues: LIM/homeobox protein Lhx2 (406 aa).

2 LIM zinc-binding domains span residues 53 to 105 (CAGC…CKED) and 115 to 168 (CARC…CRLH). The interval 250–270 (DAEHLDRDQPYPSSQKTKRMR) is disordered. Residues 266–325 (TKRMRTSFKHHQLRTMKSYFAINHNPDAKDLKQLAQKTGLTKRVLQVWFQNARAKFRRNL) constitute a DNA-binding region (homeobox). Positions 307 to 323 (KRVLQVWFQNARAKFRR) match the Nuclear localization signal motif. Residues 328-356 (QENTGVDKTSDATLQTGTPSGPASELSNA) show a composition bias toward polar residues. Disordered regions lie at residues 328–375 (QENT…SPTL) and 387–406 (GNLE…TNLF). A compositionally biased stretch (low complexity) spans 357–375 (SLSPSSTPTTLTDLTSPTL). Positions 396-406 (SPSQTTLTNLF) are enriched in polar residues.

As to quaternary structure, interacts (via LIM domains) with CITED2. Interacts with POU4F2 isoform 1.

The protein resides in the nucleus. Acts as a transcriptional activator. Stimulates the promoter of the alpha-glycoprotein gene. Transcriptional regulatory protein involved in the control of cell differentiation in developing lymphoid and neural cell types. This Mus musculus (Mouse) protein is LIM/homeobox protein Lhx2 (Lhx2).